A 221-amino-acid polypeptide reads, in one-letter code: Putative hemin import ATP-binding protein HrtA (221 aa).

The 219-residue stretch at 3–221 folds into the ABC transporter domain; that stretch reads LVVEDIVKNF…IELEDGKITD (219 aa). 39–46 provides a ligand contact to ATP; that stretch reads GASGSGKT.

This sequence belongs to the ABC transporter superfamily. HrtA family. As to quaternary structure, the complex is composed of two ATP-binding proteins (HrtA), two transmembrane proteins (HrtB) and a solute-binding protein.

It is found in the cell membrane. In terms of biological role, part of the ABC transporter complex hrt involved in hemin import. Responsible for energy coupling to the transport system. The polypeptide is Putative hemin import ATP-binding protein HrtA (hrtA) (Staphylococcus aureus (strain USA300)).